The chain runs to 262 residues: Tryptophan synthase alpha chain (262 aa).

Active-site proton acceptor residues include Glu49 and Asp60.

It belongs to the TrpA family. In terms of assembly, tetramer of two alpha and two beta chains.

The enzyme catalyses (1S,2R)-1-C-(indol-3-yl)glycerol 3-phosphate + L-serine = D-glyceraldehyde 3-phosphate + L-tryptophan + H2O. Its pathway is amino-acid biosynthesis; L-tryptophan biosynthesis; L-tryptophan from chorismate: step 5/5. Functionally, the alpha subunit is responsible for the aldol cleavage of indoleglycerol phosphate to indole and glyceraldehyde 3-phosphate. This chain is Tryptophan synthase alpha chain, found in Thermoanaerobacter sp. (strain X514).